The following is a 133-amino-acid chain: Aspartate 1-decarboxylase (133 aa).

The active-site Schiff-base intermediate with substrate; via pyruvic acid is the serine 26. Serine 26 carries the post-translational modification Pyruvic acid (Ser). Threonine 58 contacts substrate. Tyrosine 59 functions as the Proton donor in the catalytic mechanism. 74 to 76 (GAA) lines the substrate pocket.

The protein belongs to the PanD family. As to quaternary structure, heterooctamer of four alpha and four beta subunits. Pyruvate serves as cofactor. Post-translationally, is synthesized initially as an inactive proenzyme, which is activated by self-cleavage at a specific serine bond to produce a beta-subunit with a hydroxyl group at its C-terminus and an alpha-subunit with a pyruvoyl group at its N-terminus.

Its subcellular location is the cytoplasm. The catalysed reaction is L-aspartate + H(+) = beta-alanine + CO2. It participates in cofactor biosynthesis; (R)-pantothenate biosynthesis; beta-alanine from L-aspartate: step 1/1. Its function is as follows. Catalyzes the pyruvoyl-dependent decarboxylation of aspartate to produce beta-alanine. The sequence is that of Aspartate 1-decarboxylase from Legionella pneumophila (strain Lens).